The sequence spans 216 residues: Protein-L-isoaspartate O-methyltransferase (216 aa).

The active site involves S60.

Belongs to the methyltransferase superfamily. L-isoaspartyl/D-aspartyl protein methyltransferase family.

It is found in the cytoplasm. It catalyses the reaction [protein]-L-isoaspartate + S-adenosyl-L-methionine = [protein]-L-isoaspartate alpha-methyl ester + S-adenosyl-L-homocysteine. Its function is as follows. Catalyzes the methyl esterification of L-isoaspartyl residues in peptides and proteins that result from spontaneous decomposition of normal L-aspartyl and L-asparaginyl residues. It plays a role in the repair and/or degradation of damaged proteins. The chain is Protein-L-isoaspartate O-methyltransferase from Methanococcus aeolicus (strain ATCC BAA-1280 / DSM 17508 / OCM 812 / Nankai-3).